Here is a 284-residue protein sequence, read N- to C-terminus: Distal membrane arm assembly component 2 (284 aa).

The protein belongs to the ATP synthase subunit s family. Associates with mitochondrial complex I assembly intermediates during its biogenesis.

Functionally, involved in the assembly of the mitochondrial membrane respiratory chain NADH dehydrogenase (Complex I). In Drosophila melanogaster (Fruit fly), this protein is Distal membrane arm assembly component 2.